The primary structure comprises 528 residues: Tubulin-specific chaperone E (528 aa).

The CAP-Gly domain maps to 27-71 (GLVPPVAGLWLGVEWDNPERGKHDGSHEGTVYFKCRHPTAGSFIR). LRR repeat units lie at residues 152-176 (CPNIRSIDLSKNLLSSWEEVIDIAD), 178-206 (LKHLEVLNLSENKLTSPSSSPSPTGTFPT), 207-229 (LKVLVLNRTGVTWAEVLRCASGW), 231-253 (VLEKLYLESNNIIISERPTDVLQ), 254-274 (TVKLLDLSSNQLIDENQLFLI), 279-300 (RLEQLILSDIGISSIHFPDAGI), and 309-330 (SLQYLVLNDNQIAQWSFMNELD). The LRRCT domain occupies 343 to 385 (NPLTEGSKDAQTTRQFIIARIGQLRTLNKCAIEPEERRGAELD). K464 is modified (N6-acetyllysine). S496 is subject to Phosphoserine.

It belongs to the TBCE family. In terms of assembly, supercomplex made of cofactors A to E. Cofactors A and D function by capturing and stabilizing tubulin in a quasi-native conformation. Cofactor E binds to the cofactor D-tubulin complex; interaction with cofactor C then causes the release of tubulin polypeptides that are committed to the native state. Cofactors B and E can form a heterodimer which binds to alpha-tubulin and enhances their ability to dissociate tubulin heterodimers. Interacts with TBCD.

The protein localises to the cytoplasm. It is found in the cytoskeleton. In terms of biological role, tubulin-folding protein; involved in the second step of the tubulin folding pathway and in the regulation of tubulin heterodimer dissociation. Required for correct organization of microtubule cytoskeleton and mitotic splindle, and maintenance of the neuronal microtubule network. In Bos taurus (Bovine), this protein is Tubulin-specific chaperone E (TBCE).